Consider the following 337-residue polypeptide: MLRNNLGNSSDSKNEDGSVFSQTEHNIVATYLIMAGMISIISNIIVLGIFIKYKELRTPTNAIIINLAVTDIGVSSIGYPMSAASDLYGSWKFGYAGCQVYAGLNIFFGMASIGLLTVVAVDRYLTICLPDVGRRMTTNTYIGLILGAWINGLFWALMPIIGWASYAPDPTGATCTINWRKNDRSFVSYTMTVIAINFIVPLTVMFYCYYHVTLSIKHHTTSDCTESLNRDWSDQIDVTKMSVIMICMFLVAWSPYSIVCLWASFGDPKKIPPPMAIIAPLFAKSSTFYNPCIYVVANKKFRRAMLAMFKCQTHQTMPVTSILPMDVSQNPLASGRI.

The Extracellular segment spans residues 1–26; it reads MLRNNLGNSSDSKNEDGSVFSQTEHN. A glycan (N-linked (GlcNAc...) asparagine) is linked at Asn-8. Residues 27–49 form a helical membrane-spanning segment; the sequence is IVATYLIMAGMISIISNIIVLGI. At 50-61 the chain is on the cytoplasmic side; the sequence is FIKYKELRTPTN. Residues 62–87 traverse the membrane as a helical segment; that stretch reads AIIINLAVTDIGVSSIGYPMSAASDL. The Extracellular segment spans residues 88–101; that stretch reads YGSWKFGYAGCQVY. Cys-98 and Cys-175 form a disulfide bridge. Residues 102–121 form a helical membrane-spanning segment; sequence AGLNIFFGMASIGLLTVVAV. Residues 122-140 are Cytoplasmic-facing; it reads DRYLTICLPDVGRRMTTNT. A helical membrane pass occupies residues 141-164; it reads YIGLILGAWINGLFWALMPIIGWA. Over 165-188 the chain is Extracellular; sequence SYAPDPTGATCTINWRKNDRSFVS. The chain crosses the membrane as a helical span at residues 189 to 212; that stretch reads YTMTVIAINFIVPLTVMFYCYYHV. At 213-240 the chain is on the cytoplasmic side; that stretch reads TLSIKHHTTSDCTESLNRDWSDQIDVTK. Residues 241-264 form a helical membrane-spanning segment; sequence MSVIMICMFLVAWSPYSIVCLWAS. At 265-272 the chain is on the extracellular side; that stretch reads FGDPKKIP. Residues 273-297 traverse the membrane as a helical segment; sequence PPMAIIAPLFAKSSTFYNPCIYVVA. N6-(retinylidene)lysine is present on Lys-284. At 298-337 the chain is on the cytoplasmic side; it reads NKKFRRAMLAMFKCQTHQTMPVTSILPMDVSQNPLASGRI.

This sequence belongs to the G-protein coupled receptor 1 family. Opsin subfamily. In terms of tissue distribution, found only in the eye, where it is localized to the retinal pigment epithelium (RPE). In the RPE, it is localized to the microvilli that surround the photoreceptor outer segments.

It localises to the membrane. May play a role in rpe physiology either by detecting light directly or by monitoring the concentration of retinoids or other photoreceptor-derived compounds. This is Visual pigment-like receptor peropsin (RRH) from Homo sapiens (Human).